We begin with the raw amino-acid sequence, 455 residues long: Protein 60A (455 aa).

The N-terminal stretch at 1–36 (MSGLRNTSEAVAVLASLGLGMVLLMFVATTPPAVEA) is a signal peptide. Positions 37–335 (TQSGIYIDNG…SASHPRKRKK (299 aa)) are excised as a propeptide. A compositionally biased stretch (acidic residues) spans 108 to 118 (GLSDQDEDDDY). Positions 108 to 138 (GLSDQDEDDDYERGHRSRRSADLEEDEGEQQ) are disordered. N238 and N250 each carry an N-linked (GlcNAc...) asparagine glycan. The segment at 316–345 (AHSSHHRSKRSASHPRKRKKSVSPNNVPLL) is disordered. The span at 318–336 (SSHHRSKRSASHPRKRKKS) shows a compositional bias: basic residues. 3 disulfide bridges follow: C354–C420, C383–C452, and C387–C454. N396 carries N-linked (GlcNAc...) asparagine glycosylation.

Belongs to the TGF-beta family. In terms of assembly, homodimer; disulfide-linked. Interacts with nord and dpp. Expressed in cells of the developing foregut and hindgut during germ band retraction and later embryonic stages. Expressed in the wing disk, mainly in the posterior compartment in the pteropleural and medial regions extending into the progenitors of the scutellum. High levels are found within the posterior and anterior compartments of the wing pouch and low levels in the hinge region. In the eye/antennal disk, expression is highest anterior to the morphogenetic furrow and in the medial regions with lower levels of expression posterior to the morphogenetic furrow. Expressed throughout the posterior compartment of the leg imaginal disks and within the ventral anterior compartment.

The protein localises to the secreted. Functionally, required for the growth of imaginal tissues and for patterning of the adult wing. The sequence is that of Protein 60A (gbb) from Drosophila melanogaster (Fruit fly).